The chain runs to 476 residues: Siroheme synthase (476 aa).

Positions 1–207 are precorrin-2 dehydrogenase /sirohydrochlorin ferrochelatase; sequence MTANVLFPLF…QRHAEAEAVL (207 aa). Residues 25-26 and 46-47 each bind NAD(+); these read KV and PS. The residue at position 132 (Ser132) is a Phosphoserine. The uroporphyrinogen-III C-methyltransferase stretch occupies residues 220-476; sequence GSVTLVGAGA…SAPCPPALIL (257 aa). Asp252 serves as the catalytic Proton acceptor. The active-site Proton donor is the Lys274. Residues 305-307, Val310, 335-336, Met387, and Gly416 each bind S-adenosyl-L-methionine; these read GGD and TA.

In the N-terminal section; belongs to the precorrin-2 dehydrogenase / sirohydrochlorin ferrochelatase family. This sequence in the C-terminal section; belongs to the precorrin methyltransferase family.

It catalyses the reaction uroporphyrinogen III + 2 S-adenosyl-L-methionine = precorrin-2 + 2 S-adenosyl-L-homocysteine + H(+). It carries out the reaction precorrin-2 + NAD(+) = sirohydrochlorin + NADH + 2 H(+). The enzyme catalyses siroheme + 2 H(+) = sirohydrochlorin + Fe(2+). It functions in the pathway cofactor biosynthesis; adenosylcobalamin biosynthesis; precorrin-2 from uroporphyrinogen III: step 1/1. It participates in cofactor biosynthesis; adenosylcobalamin biosynthesis; sirohydrochlorin from precorrin-2: step 1/1. The protein operates within porphyrin-containing compound metabolism; siroheme biosynthesis; precorrin-2 from uroporphyrinogen III: step 1/1. Its pathway is porphyrin-containing compound metabolism; siroheme biosynthesis; siroheme from sirohydrochlorin: step 1/1. It functions in the pathway porphyrin-containing compound metabolism; siroheme biosynthesis; sirohydrochlorin from precorrin-2: step 1/1. Its function is as follows. Multifunctional enzyme that catalyzes the SAM-dependent methylations of uroporphyrinogen III at position C-2 and C-7 to form precorrin-2 via precorrin-1. Then it catalyzes the NAD-dependent ring dehydrogenation of precorrin-2 to yield sirohydrochlorin. Finally, it catalyzes the ferrochelation of sirohydrochlorin to yield siroheme. The sequence is that of Siroheme synthase from Xylella fastidiosa (strain 9a5c).